The following is a 174-amino-acid chain: Alkyl hydroperoxide reductase AhpD (174 aa).

Cysteine 130 serves as the catalytic Proton donor. A disulfide bridge links cysteine 130 with cysteine 133. The Cysteine sulfenic acid (-SOH) intermediate role is filled by cysteine 133.

It belongs to the AhpD family. As to quaternary structure, homotrimer.

It catalyses the reaction N(6)-[(R)-dihydrolipoyl]-L-lysyl-[lipoyl-carrier protein] + a hydroperoxide = N(6)-[(R)-lipoyl]-L-lysyl-[lipoyl-carrier protein] + an alcohol + H2O. In terms of biological role, antioxidant protein with alkyl hydroperoxidase activity. Required for the reduction of the AhpC active site cysteine residues and for the regeneration of the AhpC enzyme activity. The protein is Alkyl hydroperoxide reductase AhpD of Corynebacterium kroppenstedtii (strain DSM 44385 / JCM 11950 / CIP 105744 / CCUG 35717).